The chain runs to 423 residues: Ferrochelatase, mitochondrial (423 aa).

The N-terminal 40 residues, 1–40, are a transit peptide targeting the mitochondrion; the sequence is MIRFCPSCFALKRTAPVLNHTSRLGNYFNNTFSKFSVNRM. Position 200 (cysteine 200) interacts with [2Fe-2S] cluster. Aspartate 385 is a catalytic residue. The [2Fe-2S] cluster site is built by cysteine 405, cysteine 408, and cysteine 413.

This sequence belongs to the ferrochelatase family. As to quaternary structure, monomer. The cofactor is [2Fe-2S] cluster.

It is found in the mitochondrion inner membrane. It localises to the cytoplasm. The protein resides in the nucleus. The enzyme catalyses heme b + 2 H(+) = protoporphyrin IX + Fe(2+). Its pathway is porphyrin-containing compound metabolism; protoheme biosynthesis; protoheme from protoporphyrin-IX: step 1/1. Catalyzes the ferrous insertion into protoporphyrin IX. The polypeptide is Ferrochelatase, mitochondrial (hem15) (Schizosaccharomyces pombe (strain 972 / ATCC 24843) (Fission yeast)).